The sequence spans 727 residues: ADP-ribosylation factor-binding protein GGA3 (727 aa).

The VHS domain maps to 16–146 (ATNPSNRQED…MLKRQGIVQS (131 aa)). 2 positions are modified to phosphoserine: serine 159 and serine 275. Positions 171-298 (DEEKSKLLAK…VINSYKTIIE (128 aa)) constitute a GAT domain. The tract at residues 299–597 (GQIINGEVTT…VHVPLESIKP (299 aa)) is unstructured hinge. Positions 334–385 (TPSSSSPVLAPAPAPPTSGIPILPPPPQTSGPPRSRSSSQAEAPSGPDSTNN) are disordered. Positions 343–363 (APAPAPPTSGIPILPPPPQTS) are enriched in pro residues. A compositionally biased stretch (low complexity) spans 364-374 (GPPRSRSSSQA). A DXXLL motif is present at residues 391-395 (DEELL). The interval 400–419 (SDPAPTAPKESAGNSPWHLF) is disordered. In terms of domain architecture, GAE spans 598 to 719 (SSALPVTAYD…TELGEVDQFP (122 aa)).

It belongs to the GGA protein family. Monomer. Interacts with GGA1 and GGA2. Binds to clathrin and activated ARFs, such as ARF1, ARF5 and ARF6. Binds RABEP1 and RABGEF1. Interacts with the membrane proteins M6PR/CD-MPR and IGF2R/CI-MPR and the accessory proteins SYNRG, EPN4, NECAP1, NECAP2 and AFTPH/aftiphilin. Interacts with TSG101 and UBC. Interacts with ADRA2B. Interacts with NTRK1; the interaction is independent of NTRK1 activation and ubiquitination. Interacts (via VHS domain) with BACE1 (via DXXLL motif). Post-translationally, phosphorylated by CK2 and dephosphorylated by PP2A. Phosphorylation of GGA3 allows the internal DXXLL motif to bind the VHS domain and to inhibit the recognition of cargo signals. In terms of processing, ubiquitinated. Proteolytically cleaved during apoptosis by CASP3.

The protein resides in the golgi apparatus. It localises to the trans-Golgi network membrane. It is found in the endosome membrane. Its subcellular location is the early endosome membrane. The protein localises to the recycling endosome membrane. Plays a role in protein sorting and trafficking between the trans-Golgi network (TGN) and endosomes. Mediates the ARF-dependent recruitment of clathrin to the TGN and binds ubiquitinated proteins and membrane cargo molecules with a cytosolic acidic cluster-dileucine (DXXLL) motif. Mediates export of the GPCR receptor ADRA2B to the cell surface. Involved in BACE1 transport and sorting as well as regulation of BACE1 protein levels. Regulates retrograde transport of BACE1 from endosomes to the trans-Golgi network via interaction through the VHS motif and dependent of BACE1 phosphorylation. Modulates BACE1 protein levels independently of the interaction between VHS domain and DXXLL motif through recognition of ubiquitination. Key player in a novel DXXLL-mediated endosomal sorting machinery to the recycling pathway that targets NTRK1 to the plasma membrane. The polypeptide is ADP-ribosylation factor-binding protein GGA3 (Rattus norvegicus (Rat)).